A 290-amino-acid chain; its full sequence is MRAPLLLESRDYLLSEQMPVAVTNRYPQETFVEHTHQFCEIVIVWRGNGLHVLNDHPYRITCGDVFYIQAADHHSYESVHDLVLDNIIYCPERLHLNAQWHKLLPPLGPEQNQGYWRLTTQGMAQARPIIQQLAQESRKTDSWSIQLTEVLLLQLAIVLKRHRYRAEQAHLLPDGEQLDLIMSALQQSLGAYFDMANFCHKNQLVERSLKQLFRQQTGMSISHYLRQIRLCHAKCLLRGSEHRISDIAARCGFEDSNYFSAVFTREAGMTPRDYRQRFIRSPVLPTKNEP.

One can recognise an HTH araC/xylS-type domain in the interval 179–277 (DLIMSALQQS…GMTPRDYRQR (99 aa)). 2 consecutive DNA-binding regions (H-T-H motif) follow at residues 196 to 217 (ANFCHKNQLVERSLKQLFRQQT) and 244 to 267 (ISDIAARCGFEDSNYFSAVFTREA).

Binds DNA as a dimer.

It is found in the cytoplasm. Activates expression of the rhaSR operon in response to L-rhamnose. The sequence is that of HTH-type transcriptional activator RhaR from Yersinia pseudotuberculosis serotype O:3 (strain YPIII).